Consider the following 143-residue polypeptide: uncharacterized protein (143 aa).

The region spanning 24 to 78 (IRQRRRWQNMSQAALGEAIGVTFQQVQKYEKGSNRVGAGRLQQISDALEVHPSYF) is the HTH cro/C1-type domain. Positions 35–54 (QAALGEAIGVTFQQVQKYEK) form a DNA-binding region, H-T-H motif.

This is an uncharacterized protein from Sinorhizobium fredii (strain NBRC 101917 / NGR234).